A 147-amino-acid chain; its full sequence is MVHWSCEEKQFITSLWAKVNVEEVGGEALARLLIVYPWTQRFFSSFGNLSSPNAILHNAKVLAHGKKVLTSFGEAVKNLDNIKKTFAQLSELHCEKLHVDPENFKLLGNILIIVLATHFPKEFTPASQAAWTKLVNAVAHALALGYH.

Residues 3–147 form the Globin domain; it reads HWSCEEKQFI…VAHALALGYH (145 aa). Heme b-binding residues include histidine 64 and histidine 93.

This sequence belongs to the globin family. Heterotetramer of two alpha-D chains and two beta chains. As to expression, red blood cells.

Functionally, involved in oxygen transport from the lung to the various peripheral tissues. This is Hemoglobin subunit beta (HBB) from Chelonoidis carbonarius (Red-footed tortoise).